Reading from the N-terminus, the 610-residue chain is Phragmoplastin DRP1A (610 aa).

Methionine 1 carries the post-translational modification N-acetylmethionine. A Dynamin-type G domain is found at 31–300 (WDSLPAIAVV…LERVIKSRIP (270 aa)). The G1 motif stretch occupies residues 41–48 (GGQSSGKS). 44 to 49 (SSGKSS) contacts GTP. The tract at residues 67–69 (VTR) is G2 motif. Residues 142 to 145 (DLPG) are G3 motif. Residues 211-214 (TKID) are G4 motif. Residues 212-217 (KIDLMD) and 242-245 (NRSQ) each bind GTP. The tract at residues 241–244 (VNRS) is G5 motif. The GED domain occupies 518–610 (LRRIGSNVLS…SEIDAVAWSK (93 aa)).

The protein belongs to the TRAFAC class dynamin-like GTPase superfamily. Dynamin/Fzo/YdjA family. Forms homodimer and may homooligomerize and heterooligomerize to form the phragmoplastin complex. Interacts with AGD3/VAN3. May interact with CALS1. Binds to AHK2. Binds to SH3P2. Forms a complex made of SH3P2 and DRP1A and triggers its accumulation at the cell plate. Interacts with DRP2B at the plasma membrane and in forming clathrin-coated vesicles (CCV). Binds to PHIP1. As to expression, ubiquitous. Expressed in leaves (at protein level).

The protein localises to the cytoplasm. The protein resides in the cytoskeleton. It localises to the phragmoplast. Its subcellular location is the cell cortex. It is found in the cytoplasmic vesicle. The protein localises to the clathrin-coated vesicle. The protein resides in the cell membrane. It catalyses the reaction GTP + H2O = GDP + phosphate + H(+). Its function is as follows. Microtubule-associated force-producing protein that is targeted to at the leading edges of the forming cell plate during cytokinesis. Also plays a major role in plasma membrane maintenance and cell wall integrity with implications in vesicular trafficking, polar cell expansion, vascular formation, and other aspects of plant growth and development, including stigmatic papillae expansion. Collaboratively with DRP2B, participates in clathrin-coated vesicle formation during endocytosis. Necessary for BOR1 polar localization in low-boron (B) conditions as well as for BOR1 endocytosis and subsequent degradation under high-concentration of boron. Has a GTPase activity. Required for the sterols-dependent dynamic high lipid order observed at the cell plate of dividing cells. Together with SH3P2, converts the fused vesicles to tubular structures at the cell plate and phragmoplasts during cytokinesis. With DRP2B and PIP5K3, required for the precise coordination of polar ARAC3/ROP6 and ARAC4/ROP2 placement and subsequent root hair positioning during planar polarity formation in root hair-forming cells, probably by mediating the correct basal-to-planar polarity switching of D6PK into the polar, lipid-enriched domain. Involved in endocytosis required for cellulose deposition during cell wall formation and elongation. Interacts with plasma membrane-mimetic liposomes and induces their clustering. This is Phragmoplastin DRP1A from Arabidopsis thaliana (Mouse-ear cress).